Consider the following 147-residue polypeptide: Transthyretin (147 aa).

Positions methionine 1–alanine 20 are cleaved as a signal peptide. Cysteine 30 carries the post-translational modification Sulfocysteine. Lysine 35 serves as a coordination point for L-thyroxine. Glutamate 62 carries the post-translational modification 4-carboxyglutamate. Serine 72 is subject to Phosphoserine. Glutamate 74 is an L-thyroxine binding site. N-linked (GlcNAc...) asparagine glycosylation occurs at asparagine 118. Position 137 (serine 137) interacts with L-thyroxine.

Belongs to the transthyretin family. As to quaternary structure, homotetramer. Dimer of dimers. In the homotetramer, subunits assemble around a central channel that can accommodate two ligand molecules. Interacts with RBP4. Sulfonation of the reactive cysteine Cys-30 enhances the stability of the native conformation of TTR, avoiding misassembly of the protein leading to amyloid formation. As to expression, detected in serum (at protein level).

Its subcellular location is the secreted. Thyroid hormone-binding protein. Probably transports thyroxine from the bloodstream to the brain. In Bos taurus (Bovine), this protein is Transthyretin (TTR).